Here is a 522-residue protein sequence, read N- to C-terminus: Maturase K (522 aa).

It belongs to the intron maturase 2 family. MatK subfamily.

The protein localises to the plastid. The protein resides in the chloroplast. In terms of biological role, usually encoded in the trnK tRNA gene intron. Probably assists in splicing its own and other chloroplast group II introns. The sequence is that of Maturase K from Iris tenax (Oregon iris).